A 264-amino-acid polypeptide reads, in one-letter code: MHQYHDLLERILSDGAQKHDRTGTGTLSVFGHQMRFNLAAGFPMVTTKRLPLKAIVHELLWFLKGDTNIKYLHDHGVTIWDEWADANGDLGPVYGYQWRSWPTSDGGQIDQISNVVDMIRRNPDSRRLIVTAWNPADVEKMALPPCHCLFQFYVANGKLSCQLYQRSADVFLGVPFNIASYALLTMMVAQVTGLKLGEFVHSFGDVHLYSNHIEQARLQLSRTPRPLPTMTLNPDVKDIFAFRYEDFALAGYDPHPHIKAEVAV.

DUMP-binding positions include R21 and R126–R127. C146 functions as the Nucleophile in the catalytic mechanism. Residues R166–D169, N177, and H207–Y209 each bind dUMP. D169 contributes to the (6R)-5,10-methylene-5,6,7,8-tetrahydrofolate binding site. A263 contributes to the (6R)-5,10-methylene-5,6,7,8-tetrahydrofolate binding site.

Belongs to the thymidylate synthase family. Bacterial-type ThyA subfamily. Homodimer.

The protein localises to the cytoplasm. The catalysed reaction is dUMP + (6R)-5,10-methylene-5,6,7,8-tetrahydrofolate = 7,8-dihydrofolate + dTMP. The protein operates within pyrimidine metabolism; dTTP biosynthesis. In terms of biological role, catalyzes the reductive methylation of 2'-deoxyuridine-5'-monophosphate (dUMP) to 2'-deoxythymidine-5'-monophosphate (dTMP) while utilizing 5,10-methylenetetrahydrofolate (mTHF) as the methyl donor and reductant in the reaction, yielding dihydrofolate (DHF) as a by-product. This enzymatic reaction provides an intracellular de novo source of dTMP, an essential precursor for DNA biosynthesis. The sequence is that of Thymidylate synthase from Bradyrhizobium sp. (strain ORS 278).